A 57-amino-acid chain; its full sequence is Large ribosomal subunit protein bL32 (57 aa).

Residues 1–20 (MAVPKKKTSKAKRDQRRATW) show a composition bias toward basic residues. Positions 1–24 (MAVPKKKTSKAKRDQRRATWRRQA) are disordered.

This sequence belongs to the bacterial ribosomal protein bL32 family.

In Gloeothece citriformis (strain PCC 7424) (Cyanothece sp. (strain PCC 7424)), this protein is Large ribosomal subunit protein bL32.